A 176-amino-acid chain; its full sequence is MNQLGALAQVSRFTQNFSMENIKSEFQSLQSKLATLRTPQEFFNFKKISKPQNFGEVQSRVAYNLKYFSSNYGLIIGCLSIYTLLTNLLLLFVIVLVVAGIVGINKLKGEELVTPFGSFKTNQLYTGLVCVAVPIGFLASPISTLLWLIGASAVSVFGHASLMEKPIETVFDEETV.

An N-acetylmethionine modification is found at M1. The SKL peroxisome targeting motif motif lies at 11 to 13 (SRF). The residue at position 18 (S18) is a Phosphoserine. 2 helical membrane passes run 84–104 (LLTN…IVGI) and 129–149 (VCVA…LWLI).

The protein belongs to the PRA1 family. In terms of assembly, interacts with YIP1 and the Rab GTPases SEC4, YPT1, YPT6, YPT10, YPT11, YPT31, YPT32 and YPT52.

It localises to the golgi apparatus membrane. Its subcellular location is the peroxisome membrane. This Saccharomyces cerevisiae (strain ATCC 204508 / S288c) (Baker's yeast) protein is Prenylated Rab acceptor 1 (YIP3).